We begin with the raw amino-acid sequence, 246 residues long: Small ribosomal subunit protein uS2 (246 aa).

Belongs to the universal ribosomal protein uS2 family.

The sequence is that of Small ribosomal subunit protein uS2 from Helicobacter acinonychis (strain Sheeba).